A 315-amino-acid polypeptide reads, in one-letter code: MTVSSKGLLTHISQFWNMLDDLAENDPERYRNFIQQELKDGKQLCVNPEPQLCIQTKILKPNEKVLFINLCQWERIPAPQSATRPVPVSVGRPEDSAEASDAYTIIDVAYNPGVLQAAEKDQGIKDQLIRMAMLCIEERLQFTLAHSYHLTSFRLKGSIQRMKESLMGIKTDFPDLKAMTRTENTLARIRSSTVSEPNHLPEVLLTKKQASAKGRCLIEEISSSEIQVEVKKPAYELKVVKDRNEKPLKIELKVELPGIKSVSLCELSVSEVDILIEVSEMYRLCLNLPESINTEMTTAKFVKNKSALIITMPLA.

The protein belongs to the PIH1 family.

This chain is PIH1 domain-containing protein 2 (Pih1d2), found in Mus musculus (Mouse).